The sequence spans 304 residues: ATP phosphoribosyltransferase (304 aa).

The protein belongs to the ATP phosphoribosyltransferase family. Long subfamily. The cofactor is Mg(2+).

The protein resides in the cytoplasm. It catalyses the reaction 1-(5-phospho-beta-D-ribosyl)-ATP + diphosphate = 5-phospho-alpha-D-ribose 1-diphosphate + ATP. Its pathway is amino-acid biosynthesis; L-histidine biosynthesis; L-histidine from 5-phospho-alpha-D-ribose 1-diphosphate: step 1/9. Its activity is regulated as follows. Feedback inhibited by histidine. Catalyzes the condensation of ATP and 5-phosphoribose 1-diphosphate to form N'-(5'-phosphoribosyl)-ATP (PR-ATP). Has a crucial role in the pathway because the rate of histidine biosynthesis seems to be controlled primarily by regulation of HisG enzymatic activity. This is ATP phosphoribosyltransferase from Xanthomonas campestris pv. campestris (strain B100).